The following is a 511-amino-acid chain: Gap junction alpha-3 protein (511 aa).

An intramembrane segment occupies 2-15 (GDWSFLGRLLENAQ). Over 16-19 (EHST) the chain is Cytoplasmic. A helical membrane pass occupies residues 20–40 (VIGKVWLTVLFIFRILVLGAA). At 41 to 71 (AEEVWGDEQSDFTCNTQQPGCENVCYDKAFP) the chain is on the extracellular side. Intrachain disulfides connect Cys54/Cys214, Cys61/Cys208, and Cys65/Cys203. A helical membrane pass occupies residues 72–92 (ISHIRFWVLQIIFVSTPTLIY). At 93–174 (LGHVLHIVRM…GALLRTYIFN (82 aa)) the chain is on the cytoplasmic side. Residues 110 to 119 (EEELKKRGSV) show a composition bias toward basic and acidic residues. Positions 110 to 143 (EEELKKRGSVKDNNYPGAATSGGGSGGGNNFKDP) are disordered. Gly residues predominate over residues 129 to 138 (TSGGGSGGGN). The helical transmembrane segment at 175–195 (IIFKTLFEVGFIVGQYFLYGF) threads the bilayer. The Extracellular portion of the chain corresponds to 196–223 (ELKPVYQCSRPPCPHTVDCFISRPTEKT). Residues 224–244 (IFIIFMLVVASVSLLLNMLEI) form a helical membrane-spanning segment. The Cytoplasmic portion of the chain corresponds to 245-511 (YHLGWKKLKQ…SRARSDDLAV (267 aa)). Residues 397–511 (AEQQGKAPSS…SRARSDDLAV (115 aa)) form a disordered region. 2 stretches are compositionally biased toward low complexity: residues 403 to 415 (APSS…TPSS) and 440 to 456 (TTTN…ASGS).

The protein belongs to the connexin family. As to quaternary structure, a hemichannel or connexon is composed of a hexamer of connexins. A functional gap junction is formed by the apposition of two hemichannels. During early stages of lens development, interacts with the C-terminus of MIP. Detected in eye lens.

Its subcellular location is the cell membrane. It is found in the cell junction. The protein localises to the gap junction. Functionally, structural component of lens fiber gap junctions. Gap junctions are dodecameric channels that connect the cytoplasm of adjoining cells. They are formed by the docking of two hexameric hemichannels, one from each cell membrane. Small molecules and ions diffuse from one cell to a neighboring cell via the central pore. This is Gap junction alpha-3 protein (GJA3) from Gallus gallus (Chicken).